We begin with the raw amino-acid sequence, 600 residues long: Molybdenum cofactor biosynthesis protein moc-5 (600 aa).

The molybdenum cofactor biosynthesis protein A stretch occupies residues arginine 4–alanine 371. Positions methionine 68–arginine 284 constitute a Radical SAM core domain. Arginine 77 is a GTP binding site. 2 residues coordinate [4Fe-4S] cluster: cysteine 84 and cysteine 88. An S-adenosyl-L-methionine-binding site is contributed by tyrosine 90. Cysteine 91 contacts [4Fe-4S] cluster. Arginine 127 is a GTP binding site. Glycine 131 is an S-adenosyl-L-methionine binding site. Residue threonine 158 participates in GTP binding. Serine 182 is an S-adenosyl-L-methionine binding site. Lysine 218 is a GTP binding site. Residue methionine 252 participates in S-adenosyl-L-methionine binding. The [4Fe-4S] cluster site is built by cysteine 316 and cysteine 319. Position 321-323 (arginine 321–arginine 323) interacts with GTP. A [4Fe-4S] cluster-binding site is contributed by cysteine 333. Positions arginine 369–arginine 390 are disordered. The interval threonine 396–aspartate 595 is molybdenum cofactor biosynthesis protein C. Aspartate 566 (for molybdenum cofactor biosynthesis protein C activity) is an active-site residue.

The protein in the C-terminal section; belongs to the MoaC family. It in the N-terminal section; belongs to the radical SAM superfamily. MoaA family. In terms of assembly, isoform a and isoform b probably form a heterooligomer. It depends on [4Fe-4S] cluster as a cofactor.

The catalysed reaction is GTP + AH2 + S-adenosyl-L-methionine = (8S)-3',8-cyclo-7,8-dihydroguanosine 5'-triphosphate + 5'-deoxyadenosine + L-methionine + A + H(+). It catalyses the reaction (8S)-3',8-cyclo-7,8-dihydroguanosine 5'-triphosphate = cyclic pyranopterin phosphate + diphosphate. It participates in cofactor biosynthesis; molybdopterin biosynthesis. Functionally, probably forms a complex with isoform b that catalyzes the conversion of 5'-GTP to cyclic pyranopterin monophosphate (cPMP). Catalyzes the cyclization of GTP to (8S)-3',8-cyclo-7,8-dihydroguanosine 5'-triphosphate and mocs1b catalyzes the subsequent conversion of (8S)-3',8-cyclo-7,8-dihydroguanosine 5'-triphosphate to cPMP. In terms of biological role, probably forms a complex with isoform a that catalyzes the conversion of 5'-GTP to cyclic pyranopterin monophosphate (cPMP). The polypeptide is Molybdenum cofactor biosynthesis protein moc-5 (Caenorhabditis elegans).